We begin with the raw amino-acid sequence, 81 residues long: MEKLTILLLVAAVLMSIQALNQEQHQRAKINLLSKRKAPAERWWRWGGCLLWFGRCTKDSECCSDSCDRTYCELARFPEGW.

A signal peptide spans 1-19 (MEKLTILLLVAAVLMSIQA). A propeptide spanning residues 20–44 (LNQEQHQRAKINLLSKRKAPAERWW) is cleaved from the precursor. 3 disulfide bridges follow: C49-C63, C56-C67, and C62-C72.

It belongs to the conotoxin O2 superfamily. In terms of tissue distribution, expressed by the venom duct.

The protein resides in the secreted. Its function is as follows. Inhibits voltage-gated ion channels. The polypeptide is Conotoxin Vc6.13 (Conus victoriae (Queen Victoria cone)).